Consider the following 273-residue polypeptide: Phosphatidylglycerol--prolipoprotein diacylglyceryl transferase (273 aa).

The next 7 helical transmembrane spans lie at 21-41, 60-80, 95-115, 124-144, 176-196, 203-223, and 237-257; these read VSIRWYGLMYLVGFMFALWLA, LLFAGFLGVVIGGRVGYVIFY, VWTGGMSFHGGLLGVITAMFW, FFGVADFVAPLVPFGLGMGRM, SQLYEMLLEGVVLFFILNWFI, GSVSGLFLAGYGTFRFLVEFV, and ISMGQILSMPMIVLGILMMVW. Arg143 is an a 1,2-diacyl-sn-glycero-3-phospho-(1'-sn-glycerol) binding site.

The protein belongs to the Lgt family.

It is found in the cell inner membrane. The enzyme catalyses L-cysteinyl-[prolipoprotein] + a 1,2-diacyl-sn-glycero-3-phospho-(1'-sn-glycerol) = an S-1,2-diacyl-sn-glyceryl-L-cysteinyl-[prolipoprotein] + sn-glycerol 1-phosphate + H(+). It participates in protein modification; lipoprotein biosynthesis (diacylglyceryl transfer). Functionally, catalyzes the transfer of the diacylglyceryl group from phosphatidylglycerol to the sulfhydryl group of the N-terminal cysteine of a prolipoprotein, the first step in the formation of mature lipoproteins. This is Phosphatidylglycerol--prolipoprotein diacylglyceryl transferase from Vibrio parahaemolyticus serotype O3:K6 (strain RIMD 2210633).